Consider the following 132-residue polypeptide: Small ribosomal subunit protein bS16 (132 aa).

A compositionally biased stretch (basic and acidic residues) spans 82–107 (DSKVQSKKEHNANKVKKEVKKPEAKK). Residues 82-132 (DSKVQSKKEHNANKVKKEVKKPEAKKAAASKPASKPSASKSASQKKTVSKK) form a disordered region. Residues 108–132 (AAASKPASKPSASKSASQKKTVSKK) show a composition bias toward low complexity.

It belongs to the bacterial ribosomal protein bS16 family.

This is Small ribosomal subunit protein bS16 from Malacoplasma penetrans (strain HF-2) (Mycoplasma penetrans).